The sequence spans 665 residues: Dystrophia myotonica WD repeat-containing protein (665 aa).

Over residues 1–11 (MAAGGAEGGPG) the composition is skewed to gly residues. Disordered regions lie at residues 1 to 91 (MAAG…PALP) and 100 to 119 (LGDP…LGAG). An N-acetylalanine modification is found at A2. Residues 52–64 (PAPPQPTQPPPGP) show a composition bias toward pro residues. A compositionally biased stretch (low complexity) spans 65 to 76 (AAASGPGAAGPA). Positions 77–89 (SSPPPAGPGPGPA) are enriched in pro residues. WD repeat units follow at residues 208-248 (IDKT…TSTP), 279-318 (VGEG…LRGL), 321-360 (SYFG…VVAR), and 363-445 (GHKS…LSPH). 4 disordered regions span residues 380–413 (AEEA…VSPL), 446–506 (PSLA…SMEP), 524–564 (RDRG…RSRL), and 628–665 (DEET…GTVV). Residues 450–491 (RTRTLPGTPGATPPASGSSRAGETGAGPLPRSLSRSNSLPHP) show a composition bias toward low complexity. S487 carries the post-translational modification Phosphoserine. R543 is modified (omega-N-methylarginine). Residues 592 to 629 (IAQERLTVLLFLEDCIITACQEGLICTWARPGKAFTDE) form a WD 5 repeat. Positions 634–646 (QAGQASWPRSPSK) are enriched in polar residues. Residues 653 to 665 (SSQPGSSPSGTVV) show a composition bias toward low complexity.

As to quaternary structure, component of the USP12/DMWD/WDR48 deubiquitinating complex. Interacts with USP12; promotes its enzymatic activity. Interacts with USP46. Widely expressed in brain where it localizes to the olfactory bulb, forebrain, thalamus, hippocampus, cerebellum, cortex and hypothalamus (at protein level). Expression seems to be particularly strong in areas of high synaptic density such as the glomerular layer of the olfactory bulb, and mossy fiber terminal fields of the hippocampus (at protein level). Expressed in retina, with strongest expression in the external and internal plexiform layers (at protein level). Strongly expressed in brain and testis. Also detected at lower levels in heart, kidney, liver, lung, ovary, uterus, bladder and skeletal muscle. In testis, expression seems to be restricted to secondary spermatocytes.

The protein resides in the cytoplasm. It is found in the nucleus. Its subcellular location is the perikaryon. It localises to the cell projection. The protein localises to the dendrite. Functionally, regulator of the deubiquitinating USP12/DMWD/WDR48 complex. Functions as a cofactor that promotes USP12 enzymatic activity. This Mus musculus (Mouse) protein is Dystrophia myotonica WD repeat-containing protein (Dmwd).